The following is a 180-amino-acid chain: DNA-directed RNA polymerase subunit omega (180 aa).

The interval 100 to 180 (ISKSGTPILP…NSDDSETTNS (81 aa)) is disordered. Composition is skewed to acidic residues over residues 137 to 151 (EVDV…DEET) and 159 to 180 (AEAE…TTNS).

Belongs to the RNA polymerase subunit omega family. As to quaternary structure, the RNAP catalytic core consists of 2 alpha, 1 beta, 1 beta' and 1 omega subunit. When a sigma factor is associated with the core the holoenzyme is formed, which can initiate transcription.

It carries out the reaction RNA(n) + a ribonucleoside 5'-triphosphate = RNA(n+1) + diphosphate. Its function is as follows. Promotes RNA polymerase assembly. Latches the N- and C-terminal regions of the beta' subunit thereby facilitating its interaction with the beta and alpha subunits. The sequence is that of DNA-directed RNA polymerase subunit omega from Pelagibacter ubique (strain HTCC1062).